Consider the following 177-residue polypeptide: Large ribosomal subunit protein uL6 (177 aa).

The protein belongs to the universal ribosomal protein uL6 family. Part of the 50S ribosomal subunit.

Functionally, this protein binds to the 23S rRNA, and is important in its secondary structure. It is located near the subunit interface in the base of the L7/L12 stalk, and near the tRNA binding site of the peptidyltransferase center. The sequence is that of Large ribosomal subunit protein uL6 from Cereibacter sphaeroides (strain ATCC 17029 / ATH 2.4.9) (Rhodobacter sphaeroides).